The following is a 367-amino-acid chain: Peptide chain release factor 1 (367 aa).

The residue at position 238 (Gln238) is an N5-methylglutamine.

Belongs to the prokaryotic/mitochondrial release factor family. Post-translationally, methylated by PrmC. Methylation increases the termination efficiency of RF1.

It localises to the cytoplasm. Its function is as follows. Peptide chain release factor 1 directs the termination of translation in response to the peptide chain termination codons UAG and UAA. In Dictyoglomus thermophilum (strain ATCC 35947 / DSM 3960 / H-6-12), this protein is Peptide chain release factor 1.